Consider the following 222-residue polypeptide: Probable nicotinate-nucleotide adenylyltransferase (222 aa).

This sequence belongs to the NadD family.

It catalyses the reaction nicotinate beta-D-ribonucleotide + ATP + H(+) = deamido-NAD(+) + diphosphate. It participates in cofactor biosynthesis; NAD(+) biosynthesis; deamido-NAD(+) from nicotinate D-ribonucleotide: step 1/1. Catalyzes the reversible adenylation of nicotinate mononucleotide (NaMN) to nicotinic acid adenine dinucleotide (NaAD). The chain is Probable nicotinate-nucleotide adenylyltransferase from Xylella fastidiosa (strain M23).